Reading from the N-terminus, the 218-residue chain is Probable GTP-binding protein EngB (218 aa).

One can recognise an EngB-type G domain in the interval 31 to 205; it reads VGVEIAFAGR…LGILNEWCHP (175 aa). GTP is bound by residues 39 to 46, 66 to 70, 84 to 87, 151 to 154, and 184 to 186; these read GRSNAGKS, GRTQL, DLPG, TKCD, and FSS. 2 residues coordinate Mg(2+): Ser46 and Thr68.

The protein belongs to the TRAFAC class TrmE-Era-EngA-EngB-Septin-like GTPase superfamily. EngB GTPase family. Requires Mg(2+) as cofactor.

In terms of biological role, necessary for normal cell division and for the maintenance of normal septation. This is Probable GTP-binding protein EngB from Shewanella loihica (strain ATCC BAA-1088 / PV-4).